Here is a 178-residue protein sequence, read N- to C-terminus: Probable DNA-directed RNA polymerase subunit delta (178 aa).

Positions 14-81 constitute an HTH HARE-type domain; that stretch reads LSLIDVAHFI…GNNTWGLRAW (68 aa). 2 disordered regions span residues 88 to 122 and 141 to 178; these read DEEVQTQTTPKKKRKSDDDEDEDEEILDDDVDYDD and LDEDEDDDDHLPDGIEGDLATVEDDYTDGDYTEDPEDK. Composition is skewed to acidic residues over residues 105–122, 141–150, and 161–178; these read DDEDEDEEILDDDVDYDD, LDEDEDDDDH, and TVEDDYTDGDYTEDPEDK.

It belongs to the RpoE family. RNAP is composed of a core of 2 alpha, a beta and a beta' subunits. The core is associated with a delta subunit and one of several sigma factors.

Functionally, participates in both the initiation and recycling phases of transcription. In the presence of the delta subunit, RNAP displays an increased specificity of transcription, a decreased affinity for nucleic acids, and an increased efficiency of RNA synthesis because of enhanced recycling. In Listeria monocytogenes serovar 1/2a (strain ATCC BAA-679 / EGD-e), this protein is Probable DNA-directed RNA polymerase subunit delta.